A 281-amino-acid polypeptide reads, in one-letter code: 4-diphosphocytidyl-2-C-methyl-D-erythritol kinase (281 aa).

Active-site residues include K11 and D138.

The protein belongs to the GHMP kinase family. IspE subfamily.

The enzyme catalyses 4-CDP-2-C-methyl-D-erythritol + ATP = 4-CDP-2-C-methyl-D-erythritol 2-phosphate + ADP + H(+). Its pathway is isoprenoid biosynthesis; isopentenyl diphosphate biosynthesis via DXP pathway; isopentenyl diphosphate from 1-deoxy-D-xylulose 5-phosphate: step 3/6. Functionally, catalyzes the phosphorylation of the position 2 hydroxy group of 4-diphosphocytidyl-2C-methyl-D-erythritol. The chain is 4-diphosphocytidyl-2-C-methyl-D-erythritol kinase from Pelagibacter ubique (strain HTCC1062).